Here is a 102-residue protein sequence, read N- to C-terminus: Biotrophy-associated secreted protein 2 (102 aa).

The first 19 residues, 1–19, serve as a signal peptide directing secretion; it reads MVRVSTFAAILAMALSVTA. Asn-46 carries an N-linked (GlcNAc...) asparagine glycan.

Its subcellular location is the secreted. Secreted effector involved in biotrophic colonization of plant cells. The sequence is that of Biotrophy-associated secreted protein 2 from Pyricularia oryzae (strain 70-15 / ATCC MYA-4617 / FGSC 8958) (Rice blast fungus).